The following is a 375-amino-acid chain: PTS system fructose-specific EIIC component (375 aa).

The region spanning V16 to A370 is the PTS EIIC type-2 domain. The next 10 membrane-spanning stretches (helical) occupy residues V24–V44, I68–I88, G93–A113, G122–A142, V160–G180, A203–N223, V238–L258, V279–A299, V301–V321, and F340–I360.

It is found in the cell membrane. Its function is as follows. The phosphoenolpyruvate-dependent sugar phosphotransferase system (sugar PTS), a major carbohydrate active transport system, catalyzes the phosphorylation of incoming sugar substrates concomitantly with their translocation across the cell membrane. The enzyme II PtfABC PTS system is involved in fructose transport. In Haloferax volcanii (strain ATCC 29605 / DSM 3757 / JCM 8879 / NBRC 14742 / NCIMB 2012 / VKM B-1768 / DS2) (Halobacterium volcanii), this protein is PTS system fructose-specific EIIC component.